A 165-amino-acid chain; its full sequence is Ribosome maturation factor RimM (165 aa).

Residues 89–161 (EADTHYVVDL…KIVIKPVRQW (73 aa)) form the PRC barrel domain.

The protein belongs to the RimM family. Binds ribosomal protein uS19.

The protein resides in the cytoplasm. In terms of biological role, an accessory protein needed during the final step in the assembly of 30S ribosomal subunit, possibly for assembly of the head region. Essential for efficient processing of 16S rRNA. May be needed both before and after RbfA during the maturation of 16S rRNA. It has affinity for free ribosomal 30S subunits but not for 70S ribosomes. The polypeptide is Ribosome maturation factor RimM (Clostridium botulinum (strain Eklund 17B / Type B)).